We begin with the raw amino-acid sequence, 380 residues long: Protein Wnt-5a (380 aa).

Residues 1-37 form the signal peptide; it reads MKKPIGILSPGVALGTAGGAMSSKFFLMALATFFSFA. A propeptide spanning residues 38–61 is cleaved from the precursor; the sequence is QVVIEANSWWSLGMNNPVQMSEVH. C104 and C115 are joined by a disulfide. Residues N114 and N120 are each glycosylated (N-linked (GlcNAc...) asparagine). 10 disulfide bridges follow: C154–C162, C164–C182, C238–C252, C240–C247, C309–C340, C325–C335, C339–C379, C355–C370, C357–C367, and C362–C363. S244 is lipidated: O-palmitoleoyl serine; by PORCN. 2 N-linked (GlcNAc...) asparagine glycosylation sites follow: N312 and N326.

It belongs to the Wnt family. As to quaternary structure, forms a soluble 1:1 complex with AFM; this prevents oligomerization and is required for prolonged biological activity. The complex with AFM may represent the physiological form in body fluids. Homooligomer; disulfide-linked, leading to inactivation (in vitro). Interacts with PORCN. Interacts with WLS. Interacts with glypican GCP3. Interacts with PKD1 (via extracellular domain). Interacts with TMEM67. Glycosylation is necessary for secretion but not for activity. In terms of processing, palmitoleoylation is required for efficient binding to frizzled receptors. Depalmitoleoylation leads to Wnt signaling pathway inhibition. Post-translationally, proteolytic processing by TIKI1 and TIKI2 promotes oxidation and formation of large disulfide-bond oligomers, leading to inactivation of WNT5A.

It is found in the secreted. Its subcellular location is the extracellular space. The protein localises to the extracellular matrix. Ligand for members of the frizzled family of seven transmembrane receptors. Can activate or inhibit canonical Wnt signaling, depending on receptor context. In the presence of FZD4, activates beta-catenin signaling. In the presence of ROR2, inhibits the canonical Wnt pathway by promoting beta-catenin degradation through a GSK3-independent pathway which involves down-regulation of beta-catenin-induced reporter gene expression. Suppression of the canonical pathway allows chondrogenesis to occur and inhibits tumor formation. Stimulates cell migration. Decreases proliferation, migration, invasiveness and clonogenicity of carcinoma cells and may act as a tumor suppressor. Mediates motility of melanoma cells. Required during embryogenesis for extension of the primary anterior-posterior axis and for outgrowth of limbs and the genital tubercle. Inhibits type II collagen expression in chondrocytes. This is Protein Wnt-5a (Wnt5a) from Rattus norvegicus (Rat).